We begin with the raw amino-acid sequence, 518 residues long: Glutamate--cysteine ligase (518 aa).

It belongs to the glutamate--cysteine ligase type 1 family. Type 1 subfamily.

The enzyme catalyses L-cysteine + L-glutamate + ATP = gamma-L-glutamyl-L-cysteine + ADP + phosphate + H(+). Its pathway is sulfur metabolism; glutathione biosynthesis; glutathione from L-cysteine and L-glutamate: step 1/2. This is Glutamate--cysteine ligase from Escherichia coli O139:H28 (strain E24377A / ETEC).